The chain runs to 158 residues: 2-C-methyl-D-erythritol 2,4-cyclodiphosphate synthase (158 aa).

A divalent metal cation is bound by residues Asp-9 and His-11. 4-CDP-2-C-methyl-D-erythritol 2-phosphate is bound by residues 9–11 and 35–36; these read DVH and HS. Residue His-43 coordinates a divalent metal cation. 4-CDP-2-C-methyl-D-erythritol 2-phosphate is bound by residues 57 to 59, 62 to 66, 101 to 107, 133 to 136, Phe-140, and Arg-143; these read DIG, FPDTD, AQKPKMA, and TTTE.

Belongs to the IspF family. In terms of assembly, homotrimer. The cofactor is a divalent metal cation.

It carries out the reaction 4-CDP-2-C-methyl-D-erythritol 2-phosphate = 2-C-methyl-D-erythritol 2,4-cyclic diphosphate + CMP. The protein operates within isoprenoid biosynthesis; isopentenyl diphosphate biosynthesis via DXP pathway; isopentenyl diphosphate from 1-deoxy-D-xylulose 5-phosphate: step 4/6. In terms of biological role, involved in the biosynthesis of isopentenyl diphosphate (IPP) and dimethylallyl diphosphate (DMAPP), two major building blocks of isoprenoid compounds. Catalyzes the conversion of 4-diphosphocytidyl-2-C-methyl-D-erythritol 2-phosphate (CDP-ME2P) to 2-C-methyl-D-erythritol 2,4-cyclodiphosphate (ME-CPP) with a corresponding release of cytidine 5-monophosphate (CMP). In Bacillus cytotoxicus (strain DSM 22905 / CIP 110041 / 391-98 / NVH 391-98), this protein is 2-C-methyl-D-erythritol 2,4-cyclodiphosphate synthase.